A 399-amino-acid polypeptide reads, in one-letter code: Proteasome-activating nucleotidase (399 aa).

Positions 19–60 (ITYLKRRIRQLELQVRMLEADKERLERELSRLRSEMSRLRQP) form a coiled coil. ATP contacts are provided by residues 184–189 (GCGKTL) and H323. A docks into pockets in the proteasome alpha-ring to cause gate opening region spans residues 397-399 (IYG).

Belongs to the AAA ATPase family. In terms of assembly, homohexamer. The hexameric complex has a two-ring architecture resembling a top hat that caps the 20S proteasome core at one or both ends. Upon ATP-binding, the C-terminus of PAN interacts with the alpha-rings of the proteasome core by binding to the intersubunit pockets.

It is found in the cytoplasm. Its function is as follows. ATPase which is responsible for recognizing, binding, unfolding and translocation of substrate proteins into the archaeal 20S proteasome core particle. Is essential for opening the gate of the 20S proteasome via an interaction with its C-terminus, thereby allowing substrate entry and access to the site of proteolysis. Thus, the C-termini of the proteasomal ATPase function like a 'key in a lock' to induce gate opening and therefore regulate proteolysis. Unfolding activity requires energy from ATP hydrolysis, whereas ATP binding alone promotes ATPase-20S proteasome association which triggers gate opening, and supports translocation of unfolded substrates. This is Proteasome-activating nucleotidase from Pyrococcus horikoshii (strain ATCC 700860 / DSM 12428 / JCM 9974 / NBRC 100139 / OT-3).